The following is a 131-amino-acid chain: Nitrogenase-stabilizing/protective protein NifW (131 aa).

The protein belongs to the NifW family. In terms of assembly, homotrimer; associates with NifD.

In terms of biological role, may protect the nitrogenase Fe-Mo protein from oxidative damage. This is Nitrogenase-stabilizing/protective protein NifW from Frankia alni (strain DSM 45986 / CECT 9034 / ACN14a).